The sequence spans 1196 residues: MVLSNEPAASAAEEEVEDDALVRASALEAFGESAETRALLRSLPAVHRERASREVAEERFRVIMDKYQEQPHLLDPHLEWMMNSLLDLVQDETSLPDLVHLAFKFLYIITKVRGYKVFLRLFPHEVANVQPVLDMFTGQNPKDHETWETRYMLLLWLSVTCLIPFDFSRLDGNLSTQTGETRVPTMDRILQIAESYLVVSDKARDAAAVLVSKFITRPDVKQRKMASFLDWSLCTLAHSSFQTIEGVITMDGMLQALAQIFKHGKREDCLPYANTVLQCLDGCRLPESSHTSLRKLGVKLVQRLGLTFLKPKVATWRYQRGCRSLAANLKLCAPGKSDQKLLSDSLTSDGDEDYDVPEGVETVIEQLLVGLKDKDTVVRWSAAKGIGRMAGRLPRELADDVVGSVLDCFSFQETDKAWHGGCLALAELGRRGLLLPSRLSEVVTVILKALTYDEKRGACSVGANVRDAACYVCWAFARAYEPQELTPFVTAISSALVIAAVFDRNVNCRRAASAAFQENVGRQGTFPHGIDILTTADYFAVGNISNCFLIISVFIAGFQEYTKPMIDHLVSMKINHWDGAIRELSAKALHNLTPQVPEYIAMHVFPALLLMTQSPDLHTRHGAILACAEVTYALYKLATQSNRLVTDYLDEKAVQSLKQIHQQLCDRHLYRGLGGELMRQAVCILIEKLSLSRMPFKGDATVEGWQWLINDTLRSLHLVSSHSRQQIKEVAVSALTALCSEYYVKEPGEAGSSIAKELIPQYLAELQSPEEMARCGFSSALGALPGFLLRGHLQQVLSGLRRVTCISPNDVSFAEARRDGLKAISRICQTVGVNTRGPPDEVICKENISEVYAALLGCMSDYTTDSRGDVGAWVREAAMTSLMDLMLLLARTEPVLIEAHICERVMCCVAQQASEKIDRFRAHAARVFLTLLHFDSPPIPHVPHRQELESLFPRSDVATVNWNAPSQAFPLITQLLGLPTYRYHVLLGLAVSVGGLTESTVRHSTQSLFEYMKGIQKDAQVLQSFSETLLKVFEDNLLNDRVSVSLLKMLDQLLANGCFDIFTAEENHPFCVKLLTLCKEEIKKSKDIQKLRSSIAVLCGMVQFNGDVRKKILLQLFLLLGHPFPVIRKSTASQVYEMVLTYSDLVDAEVLDEVMSVLSDTAWDAELPVVREQRNRLCDLLGVPRPQLVPKPIPGS.

HEAT repeat units lie at residues 363–401, 599–634, 752–788, and 1106–1142; these read VIEQ…ADDV, YIAM…TYAL, SSIA…PGFL, and GDVR…VLTY.

Belongs to the TBCD family. As to quaternary structure, found in a complex with at least ARL2, PPP2CB, PPP2R1A, PPP2R2A, PPP2R5E and TBCD. Interacts with PPP2CB. Part of a supercomplex made of cofactors A to E. Cofactors A and D function by capturing and stabilizing tubulin in a quasi-native conformation. Cofactor E binds to the cofactor D-tubulin complex; interaction with cofactor C then causes the release of tubulin polypeptides that are committed to the native state. Interacts with ARL2; interaction is enhanced with the GDP-bound form of ARL2. Does not interact with ARL3, ARL4A and ARL4D. Interacts with beta tubulin. Interacts with TBCE.

It is found in the cell junction. Its subcellular location is the tight junction. It localises to the lateral cell membrane. The protein localises to the cytoplasm. The protein resides in the adherens junction. It is found in the cytoskeleton. Its subcellular location is the microtubule organizing center. It localises to the centrosome. Tubulin-folding protein implicated in the first step of the tubulin folding pathway and required for tubulin complex assembly. Involved in the regulation of microtubule polymerization or depolymerization, it modulates microtubule dynamics by capturing GTP-bound beta-tubulin (TUBB). Its ability to interact with beta tubulin is regulated via its interaction with ARL2. Acts as a GTPase-activating protein (GAP) for ARL2. Induces microtubule disruption in absence of ARL2. Increases degradation of beta tubulin, when overexpressed in polarized cells. Promotes epithelial cell detachment, a process antagonized by ARL2. Induces tight adherens and tight junctions disassembly at the lateral cell membrane. Required for correct assembly and maintenance of the mitotic spindle, and proper progression of mitosis. Involved in neuron morphogenesis. The protein is Tubulin-specific chaperone D (Tbcd) of Mus musculus (Mouse).